Here is a 95-residue protein sequence, read N- to C-terminus: UPF0235 protein Swoo_1329 (95 aa).

Belongs to the UPF0235 family.

In Shewanella woodyi (strain ATCC 51908 / MS32), this protein is UPF0235 protein Swoo_1329.